The sequence spans 687 residues: Amine oxidase [copper-containing] gamma 2 (687 aa).

The signal sequence occupies residues 1-24 (MVELSFSQLLVLLLSLLFLFTTLA). The N-linked (GlcNAc...) asparagine glycan is linked to Asn-154. Cys-169 and Cys-191 are oxidised to a cystine. The N-linked (GlcNAc...) asparagine glycan is linked to Asn-244. 333–344 (YMDAGEFGLGPS) is a substrate binding site. Asp-335 acts as the Proton acceptor in catalysis. An intrachain disulfide couples Cys-354 to Cys-380. 420–425 (VGNYDY) contacts substrate. Tyr-423 (schiff-base intermediate with substrate; via topaquinone) is an active-site residue. The residue at position 423 (Tyr-423) is a 2',4',5'-topaquinone. The Cu cation site is built by His-480 and His-482. Mn(2+) is bound by residues Asp-489, Met-490, and Asp-491. 2 N-linked (GlcNAc...) asparagine glycosylation sites follow: Asn-497 and Asn-598. Mn(2+)-binding residues include Asp-632 and Ile-633. Residue His-643 participates in Cu cation binding.

This sequence belongs to the copper/topaquinone oxidase family. In terms of assembly, homodimer. Cu cation is required as a cofactor. Requires Zn(2+) as cofactor. It depends on L-topaquinone as a cofactor. The cofactor is Mn(2+). In terms of processing, topaquinone (TPQ) is generated by copper-dependent autoxidation of a specific tyrosyl residue. As to expression, expressed in roots, leaves and cotyledons.

The protein localises to the secreted. It is found in the extracellular space. It localises to the apoplast. The enzyme catalyses a primary methyl amine + O2 + H2O = an aldehyde + H2O2 + NH4(+). It functions in the pathway amine and polyamine degradation; putrescine degradation. Functionally, copper amine oxidase that can use putrescine and spermidine as substrates. The polypeptide is Amine oxidase [copper-containing] gamma 2 (Arabidopsis thaliana (Mouse-ear cress)).